The sequence spans 331 residues: 6-phosphogluconolactonase (331 aa).

The protein belongs to the cycloisomerase 2 family.

The enzyme catalyses 6-phospho-D-glucono-1,5-lactone + H2O = 6-phospho-D-gluconate + H(+). It functions in the pathway carbohydrate degradation; pentose phosphate pathway; D-ribulose 5-phosphate from D-glucose 6-phosphate (oxidative stage): step 2/3. Catalyzes the hydrolysis of 6-phosphogluconolactone to 6-phosphogluconate. This chain is 6-phosphogluconolactonase, found in Serratia proteamaculans (strain 568).